The sequence spans 693 residues: Elongation factor G (693 aa).

One can recognise a tr-type G domain in the interval lysine 8–leucine 282. GTP-binding positions include alanine 17–threonine 24, aspartate 81–histidine 85, and asparagine 135–aspartate 138.

This sequence belongs to the TRAFAC class translation factor GTPase superfamily. Classic translation factor GTPase family. EF-G/EF-2 subfamily.

The protein resides in the cytoplasm. In terms of biological role, catalyzes the GTP-dependent ribosomal translocation step during translation elongation. During this step, the ribosome changes from the pre-translocational (PRE) to the post-translocational (POST) state as the newly formed A-site-bound peptidyl-tRNA and P-site-bound deacylated tRNA move to the P and E sites, respectively. Catalyzes the coordinated movement of the two tRNA molecules, the mRNA and conformational changes in the ribosome. The polypeptide is Elongation factor G (Staphylococcus epidermidis (strain ATCC 35984 / DSM 28319 / BCRC 17069 / CCUG 31568 / BM 3577 / RP62A)).